The primary structure comprises 161 residues: Nucleotide-binding protein Shewmr4_3156 (161 aa).

This sequence belongs to the YajQ family.

In terms of biological role, nucleotide-binding protein. The chain is Nucleotide-binding protein Shewmr4_3156 from Shewanella sp. (strain MR-4).